Consider the following 889-residue polypeptide: DNA gyrase subunit A (889 aa).

The 467-residue stretch at 35–501 (LPDVRDGLKP…GFEDLEDEDL (467 aa)) folds into the Topo IIA-type catalytic domain. Catalysis depends on Tyr-123, which acts as the O-(5'-phospho-DNA)-tyrosine intermediate. Residues 528–534 (QNRGGRG) carry the GyrA-box motif. The disordered stretch occupies residues 811-889 (KEDAEDETNE…IQQSLDEDEE (79 aa)). Residues 813-823 (DAEDETNEDEQ) are compositionally biased toward acidic residues. A compositionally biased stretch (basic and acidic residues) spans 863-875 (DGRIEVRQDFMDR). The segment covering 876–889 (VEEDIQQSLDEDEE) has biased composition (acidic residues).

This sequence belongs to the type II topoisomerase GyrA/ParC subunit family. In terms of assembly, heterotetramer, composed of two GyrA and two GyrB chains. In the heterotetramer, GyrA contains the active site tyrosine that forms a transient covalent intermediate with DNA, while GyrB binds cofactors and catalyzes ATP hydrolysis.

It localises to the cytoplasm. It catalyses the reaction ATP-dependent breakage, passage and rejoining of double-stranded DNA.. In terms of biological role, a type II topoisomerase that negatively supercoils closed circular double-stranded (ds) DNA in an ATP-dependent manner to modulate DNA topology and maintain chromosomes in an underwound state. Negative supercoiling favors strand separation, and DNA replication, transcription, recombination and repair, all of which involve strand separation. Also able to catalyze the interconversion of other topological isomers of dsDNA rings, including catenanes and knotted rings. Type II topoisomerases break and join 2 DNA strands simultaneously in an ATP-dependent manner. The polypeptide is DNA gyrase subunit A (Staphylococcus aureus).